The chain runs to 213 residues: Imidazole glycerol phosphate synthase subunit HisH (213 aa).

Residues 4 to 211 (NLGLIDYGMG…LTWLRNGAEP (208 aa)) enclose the Glutamine amidotransferase type-1 domain. Cysteine 82 functions as the Nucleophile in the catalytic mechanism. Active-site residues include histidine 186 and glutamate 188.

Heterodimer of HisH and HisF.

The protein localises to the cytoplasm. It catalyses the reaction 5-[(5-phospho-1-deoxy-D-ribulos-1-ylimino)methylamino]-1-(5-phospho-beta-D-ribosyl)imidazole-4-carboxamide + L-glutamine = D-erythro-1-(imidazol-4-yl)glycerol 3-phosphate + 5-amino-1-(5-phospho-beta-D-ribosyl)imidazole-4-carboxamide + L-glutamate + H(+). It carries out the reaction L-glutamine + H2O = L-glutamate + NH4(+). The protein operates within amino-acid biosynthesis; L-histidine biosynthesis; L-histidine from 5-phospho-alpha-D-ribose 1-diphosphate: step 5/9. Its function is as follows. IGPS catalyzes the conversion of PRFAR and glutamine to IGP, AICAR and glutamate. The HisH subunit catalyzes the hydrolysis of glutamine to glutamate and ammonia as part of the synthesis of IGP and AICAR. The resulting ammonia molecule is channeled to the active site of HisF. The chain is Imidazole glycerol phosphate synthase subunit HisH from Synechococcus sp. (strain CC9605).